Here is a 253-residue protein sequence, read N- to C-terminus: Short chain dehydrogenase ple7 (253 aa).

The helical transmembrane segment at 5 to 25 (IVIVTGASHGIGLATVNLLLA) threads the bilayer. Residues Val8, Arg116, Tyr148, Lys152, and Asn184 each contribute to the NADP(+) site. The active-site Proton acceptor is the Tyr148. Lys152 serves as the catalytic Lowers pKa of active site Tyr. N-linked (GlcNAc...) asparagine glycosylation occurs at Asn187.

Belongs to the short-chain dehydrogenases/reductases (SDR) family.

Its subcellular location is the membrane. It functions in the pathway secondary metabolite biosynthesis; terpenoid biosynthesis. Functionally, short chain dehydrogenase; part of the gene cluster that mediates the biosynthesis of pleuromutilin, a tricyclic diterpene showing antibacterial properties. The geranylgeranyl diphosphate (GGPP) synthase ple4 catalyzes the first step in pleuromutilin biosynthesis. GGPP is then substrate of the premutilin synthase (PS) ple3 to yield premutilin. Premutilin synthase is a bifunctional enzyme composed of the fusion of a class II diterpene cyclase (DTC) and a class I diterpene synthase (DTS), with the corresponding domains and active sites containing characteristic aspartate-rich motifs. GGPP is first converted to mutildienyl-diphosphate (MPP) at the class II DTC site. MPP is subsequently further cyclized at the class I DTS site, followed by a 1,5-hydride shift and addition of water prior to terminating deprotonation, to yield premutilin. The cytochrome P450 monooxygenases ple5 and ple6 hydroxylate premutilin at C-11 and C-3, respectively, producing 11-hydroxypremutilin and 3-hydroxypremutilin. The combination of the actions of both ple5 and ple6 leads to the production of 3,11-dihydroxypremutilin. The short chain dehydrogenase ple7 further converts 3,11-dihydroxypremutilin into mutilin. The acetyltransferase ple2 then acetylates mutilin to produce 14-O-acetylmutilin. Finally, the cytochrome P450 monooxygenase ple1 catalyzes hydroxylation on the alpha position of the acetyl side chain of 14-O-acetylmutilin to yield pleuromutilin. The sequence is that of Short chain dehydrogenase ple7 from Rhodocybe pseudopiperita (Clitopilus pseudopiperitus).